The primary structure comprises 78 residues: Putative antitoxin VapB4 (78 aa).

Belongs to the UPF0330 family.

Possibly the antitoxin component of a type II toxin-antitoxin (TA) system. Its cognate toxin is VapC4 (Potential). The protein is Putative antitoxin VapB4 (vapB4) of Pyrococcus furiosus (strain ATCC 43587 / DSM 3638 / JCM 8422 / Vc1).